Consider the following 111-residue polypeptide: Ribosome-binding factor A (111 aa).

Belongs to the RbfA family. In terms of assembly, monomer. Binds 30S ribosomal subunits, but not 50S ribosomal subunits or 70S ribosomes.

Its subcellular location is the cytoplasm. One of several proteins that assist in the late maturation steps of the functional core of the 30S ribosomal subunit. Associates with free 30S ribosomal subunits (but not with 30S subunits that are part of 70S ribosomes or polysomes). Required for efficient processing of 16S rRNA. May interact with the 5'-terminal helix region of 16S rRNA. The chain is Ribosome-binding factor A from Helicobacter pylori (strain ATCC 700392 / 26695) (Campylobacter pylori).